A 340-amino-acid chain; its full sequence is MKRPYDALMPLPKAELHLHIEGTLEPELAFALAARNGVSLPYADEDALREAYRFADLQSFLNLYYELMAVLRTERDFEDLADAYLARAAAQGVRHAEIFFDPQAHLARGVEMGTVVEGLWRALGASRENHGVSTRLILCFLRDESAESAMRTLDAAGPYLDRITGVGLDSAEVGHPPVKFREVYEAAAALGLRRVAHAGEEGPPAYVVEALDVLGVERIDHGLRSVEDPALVERLVRERVPLTLCPLSNVRLRTVDTLADHPLPAMLDAGLMCTVNSDDPAYFGGYAGDNFDAVRQALGLTGERLRELARNSFLASFLEDDEELRARYLAEVEAYRFPAA.

Positions 17, 19, and 197 each coordinate Zn(2+). Glutamate 200 acts as the Proton donor in catalysis. Aspartate 278 provides a ligand contact to Zn(2+). Aspartate 279 is a binding site for substrate.

This sequence belongs to the metallo-dependent hydrolases superfamily. Adenosine and AMP deaminases family. Adenine deaminase type 2 subfamily. Requires Zn(2+) as cofactor.

It catalyses the reaction adenine + H2O + H(+) = hypoxanthine + NH4(+). Functionally, catalyzes the hydrolytic deamination of adenine to hypoxanthine. Plays an important role in the purine salvage pathway and in nitrogen catabolism. This chain is Adenine deaminase, found in Streptomyces coelicolor (strain ATCC BAA-471 / A3(2) / M145).